A 249-amino-acid chain; its full sequence is 5'-nucleotidase SurE (249 aa).

Residues Asp8, Asp9, Ser39, and Asn91 each coordinate a divalent metal cation.

The protein belongs to the SurE nucleotidase family. It depends on a divalent metal cation as a cofactor.

It localises to the cytoplasm. The enzyme catalyses a ribonucleoside 5'-phosphate + H2O = a ribonucleoside + phosphate. Functionally, nucleotidase that shows phosphatase activity on nucleoside 5'-monophosphates. The protein is 5'-nucleotidase SurE of Stutzerimonas stutzeri (strain A1501) (Pseudomonas stutzeri).